The primary structure comprises 919 residues: MAASTKPTTKLSTEEDDVSRRDSESSADFMKSNEELQATMIPEDDGANPATGQPTWTILSDTEIKSVLVVASFAAAISPFSTSTYYPVVTAIARDLGVSVSKINLTMSSYQIFQGVAPTITAAFADTYGRRPMFLVCFVTYFVANVGLALQNDFTTLLVLRCLQSTGSSGTFALAQAVTADITTRAERGRYLIYATLGSTLGPFIGPVIGGLLVKFLGWRSVFWFLLCMGTVFALLIFIFFGETARPIVGDGSIPPQSWNRSYLQMRSKGVSNLKPNLASLERRKSRPNPLTSLALLWDRENFILSVSGGLLYAGYSSVTSVLASQLQQRYKYDAVQVGLCYLPVGFGSLLAYRTTVRLMDWNFEREAKKQGLVIVKNRQTDISRFDLEKARLGFVFPMILVCSGLLVAYGWQMHYHAPLAPILVTMFLIAIILTGVMNAIAALLTDVNRENAAAVGAAMNLTRLLLGAGAVAVVGPLNKSAGIGWTATVTAGFSYNVNTKGIQTKRRAAAIFEVSRATLHRRCDGKRARRDCQPNSKKLIQQEEEVILKYILDLDTRGFLPTYAAERGMADKLLSTRGGSPVGRDWPRNFVKHKAKYSILDEDVYSFDEAGFMMGKITTQLAVTGSERRGRPKAIQPENREWVTLIQGINAAGWAISPFVVFAGQHHLSAWYEEDIPRDWAIAVSDNGWTTNEIGVEWLEHFIKYTDGKAVGVRRLLIFDGHESHHSLKSRELCKENNIYTLYMPPHSSHLLQPLDIGCFSPLKRAYSREIEALICHHINHITKLEFLPAFKAAFQRSFTSANICSSFRGAGLVPLQPDIVLSKLDVRLLTHIPAASPEAPWEAKTPSNRKKKQIQKRGTLTKGEGEDTLAQKEADQQIEREQRQGGEQSGRSRQALARSLEALEVGGVAHSLNGSFV.

The span at 1 to 11 (MAASTKPTTKL) shows a compositional bias: polar residues. Positions 1–33 (MAASTKPTTKLSTEEDDVSRRDSESSADFMKSN) are disordered. Residues 69–89 (VVASFAAAISPFSTSTYYPVV) form a helical membrane-spanning segment. Asn-104 carries an N-linked (GlcNAc...) asparagine glycan. The next 3 membrane-spanning stretches (helical) occupy residues 132-152 (PMFLVCFVTYFVANVGLALQN), 192-212 (LIYATLGSTLGPFIGPVIGGL), and 222-242 (VFWFLLCMGTVFALLIFIFFG). Asn-260 carries an N-linked (GlcNAc...) asparagine glycan. Helical transmembrane passes span 303-323 (FILSVSGGLLYAGYSSVTSVL), 333-353 (YDAVQVGLCYLPVGFGSLLAY), 393-413 (LGFVFPMILVCSGLLVAYGWQ), and 418-438 (APLAPILVTMFLIAIILTGVM). Residue Asn-461 is glycosylated (N-linked (GlcNAc...) asparagine). A helical transmembrane segment spans residues 465 to 485 (LLLGAGAVAVVGPLNKSAGIG). The DDE-1 domain occupies 641–809 (REWVTLIQGI…FTSANICSSF (169 aa)). A disordered region spans residues 840 to 897 (EAPWEAKTPSNRKKKQIQKRGTLTKGEGEDTLAQKEADQQIEREQRQGGEQSGRSRQA). The segment covering 865–886 (GEGEDTLAQKEADQQIEREQRQ) has biased composition (basic and acidic residues). Positions 887-896 (GGEQSGRSRQ) are enriched in low complexity. N-linked (GlcNAc...) asparagine glycosylation occurs at Asn-915.

Belongs to the major facilitator superfamily. CAR1 family.

It is found in the membrane. In terms of biological role, MFS-type transporter; part of the gene cluster that mediates the biosynthesis of squalestatin S1 (SQS1, also known as zaragozic acid A), a heavily oxidized fungal polyketide that offers potent cholesterol lowering activity by targeting squalene synthase (SS). The sequence is that of MFS-type transporter clz9 from Cochliobolus lunatus (Filamentous fungus).